The chain runs to 92 residues: Small ribosomal subunit protein uS19c (92 aa).

It belongs to the universal ribosomal protein uS19 family.

It localises to the plastid. The protein localises to the chloroplast. In terms of biological role, protein S19 forms a complex with S13 that binds strongly to the 16S ribosomal RNA. This Liriodendron tulipifera (Tuliptree) protein is Small ribosomal subunit protein uS19c.